The chain runs to 1076 residues: Probable cellulose synthase A catalytic subunit 1 [UDP-forming] (1076 aa).

Residues 1–267 (MAANAGMVAG…SRIVPIPSNQ (267 aa)) lie on the Cytoplasmic side of the membrane. The Zn(2+) site is built by C41, C44, C60, C63, C68, C71, C83, and C86. An RING-type; degenerate zinc finger spans residues 41-87 (CQICGDTVGVSATGDVFVACNECAFPVCRPCYEYERKEGNQCCPQCK). The segment at 119–179 (HGNGKGPEWQ…HSIRSGTSSY (61 aa)) is disordered. A helical transmembrane segment spans residues 268 to 288 (LNLYRIVIILRLIILMFFFQY). The Extracellular portion of the chain corresponds to 289–296 (RVTHPVRD). The helical transmembrane segment at 297-317 (AYGLWLVSVICEIWFALSWLL) threads the bilayer. Over 318–851 (DQFPKWYPIN…LLERLAYINT (534 aa)) the chain is Cytoplasmic. 4 residues coordinate UDP-alpha-D-glucose: S356, K362, E363, and D392. D392 is an active-site residue. The stretch at 446–473 (VKERRAMKREYEEFKVRINALVAKAQKV) forms a coiled coil. K533 is a UDP-alpha-D-glucose binding site. K534 and D558 together coordinate Mn(2+). The active site involves D775. The chain crosses the membrane as a helical span at residues 852-872 (IVYPITSIPLIAYCVLPAICL). Topologically, residues 873-884 (LTNKFIIPEISN) are extracellular. Residues 885-905 (YAGMFFILLFASIFATGILEL) traverse the membrane as a helical segment. Residues 906-920 (RWSGVGIEDWWRNEQ) lie on the Cytoplasmic side of the membrane. Residues 921-941 (FWVIGGTSAHLFAVFQGLLKV) traverse the membrane as a helical segment. The Extracellular segment spans residues 942-971 (LAGIDTNFTVTSKASDEDGDFAELYVFKWT). Residue N948 is glycosylated (N-linked (GlcNAc...) asparagine). Residues 972–992 (SLLIPPTTVLVINLVGMVAGI) form a helical membrane-spanning segment. Over 993 to 1003 (SYAINSGYQSW) the chain is Cytoplasmic. The helical transmembrane segment at 1004–1024 (GPLFGKLFFSIWVILHLYPFL) threads the bilayer. Residues 1025 to 1033 (KGLMGRQNR) are Extracellular-facing. A helical membrane pass occupies residues 1034 to 1054 (TPTIVIVWSILLASIFSLLWV). The Cytoplasmic segment spans residues 1055–1076 (KIDPFISPTQKAVALGQCGVNC).

It belongs to the glycosyltransferase 2 family. Plant cellulose synthase subfamily. The cofactor is Zn(2+). Requires Mn(2+) as cofactor.

It is found in the cell membrane. It carries out the reaction [(1-&gt;4)-beta-D-glucosyl](n) + UDP-alpha-D-glucose = [(1-&gt;4)-beta-D-glucosyl](n+1) + UDP + H(+). Its pathway is glycan metabolism; plant cellulose biosynthesis. Functionally, catalytic subunit of cellulose synthase terminal complexes ('rosettes'), required for beta-1,4-glucan microfibril crystallization, a major mechanism of the cell wall formation. This is Probable cellulose synthase A catalytic subunit 1 [UDP-forming] (CESA1) from Oryza sativa subsp. indica (Rice).